The chain runs to 30 residues: uncharacterized protein (30 aa).

Residues 9–26 (YRLVIIVLISVYYRYRFF) traverse the membrane as a helical segment.

It is found in the plastid. It localises to the chloroplast membrane. This is an uncharacterized protein from Marchantia polymorpha (Common liverwort).